The sequence spans 303 residues: Methionyl-tRNA formyltransferase (303 aa).

111–114 (SLLP) lines the (6S)-5,6,7,8-tetrahydrofolate pocket.

Belongs to the Fmt family.

The enzyme catalyses L-methionyl-tRNA(fMet) + (6R)-10-formyltetrahydrofolate = N-formyl-L-methionyl-tRNA(fMet) + (6S)-5,6,7,8-tetrahydrofolate + H(+). In terms of biological role, attaches a formyl group to the free amino group of methionyl-tRNA(fMet). The formyl group appears to play a dual role in the initiator identity of N-formylmethionyl-tRNA by promoting its recognition by IF2 and preventing the misappropriation of this tRNA by the elongation apparatus. The chain is Methionyl-tRNA formyltransferase from Ehrlichia chaffeensis (strain ATCC CRL-10679 / Arkansas).